A 289-amino-acid chain; its full sequence is Phosphoribulokinase (289 aa).

Residue 12–20 participates in ATP binding; the sequence is GSSGAGTTT.

It belongs to the phosphoribulokinase family.

The catalysed reaction is D-ribulose 5-phosphate + ATP = D-ribulose 1,5-bisphosphate + ADP + H(+). It functions in the pathway carbohydrate biosynthesis; Calvin cycle. This is Phosphoribulokinase (cbbP) from Rhizobium meliloti (strain 1021) (Ensifer meliloti).